Consider the following 460-residue polypeptide: Ribosomal protein uS12 methylthiotransferase RimO (460 aa).

The MTTase N-terminal domain occupies 17-128 (PAVAVLHLGC…IVQVIQRAER (112 aa)). Cys26, Cys62, Cys91, Cys166, Cys170, and Cys173 together coordinate [4Fe-4S] cluster. The 230-residue stretch at 152-381 (TTHAPVAYLR…MQLQQGIAFR (230 aa)) folds into the Radical SAM core domain. Residues 384–450 (REQVGQVVPV…PYDLFGQVVE (67 aa)) enclose the TRAM domain.

This sequence belongs to the methylthiotransferase family. RimO subfamily. It depends on [4Fe-4S] cluster as a cofactor.

Its subcellular location is the cytoplasm. The catalysed reaction is L-aspartate(89)-[ribosomal protein uS12]-hydrogen + (sulfur carrier)-SH + AH2 + 2 S-adenosyl-L-methionine = 3-methylsulfanyl-L-aspartate(89)-[ribosomal protein uS12]-hydrogen + (sulfur carrier)-H + 5'-deoxyadenosine + L-methionine + A + S-adenosyl-L-homocysteine + 2 H(+). In terms of biological role, catalyzes the methylthiolation of an aspartic acid residue of ribosomal protein uS12. The polypeptide is Ribosomal protein uS12 methylthiotransferase RimO (Synechococcus sp. (strain JA-3-3Ab) (Cyanobacteria bacterium Yellowstone A-Prime)).